We begin with the raw amino-acid sequence, 30 residues long: GSAIRCGESCLLGKCYTPGCTCDRPICKKN.

A cross-link (cyclopeptide (Gly-Asn)) is located at residues G1 to N30. Cystine bridges form between C6/C20, C10/C22, and C15/C27.

Post-translationally, contains 3 disulfide bonds. In terms of processing, this is a cyclic peptide. In terms of tissue distribution, expressed in root nodules but not in seed.

Functionally, probably participates in a plant defense mechanism. Active against Gram-negative bacterium E.coli ATCC 700926 (MIC=0.5 uM) under low-salt conditions. Not active against Gram-positive bacterium S.aureus ATCC 12600 up to a concentration of 100 uM under low-salt conditions. Exhibits immunomodulatory activity but no cytotoxicity in vitro. This chain is Cliotide T20, found in Clitoria ternatea (Butterfly pea).